We begin with the raw amino-acid sequence, 757 residues long: Chloride anion exchanger (757 aa).

The Cytoplasmic segment spans residues 1–71 (MIEAIGNQYV…SWLPAYKIKE (71 aa)). The helical transmembrane segment at 72 to 92 (WLLSDIVSGISTGLVAVLQGL) threads the bilayer. Alanine 93 is a topological domain (extracellular). A helical transmembrane segment spans residues 94–114 (FALLVNIPPAYGLYAAFFPVI). Residues 115-124 (TYFFLGTSRH) are Cytoplasmic-facing. The chain crosses the membrane as a helical span at residues 125–145 (ISVGPFPVLSMMVGVVVTRVA). Topologically, residues 146–176 (SGSDTSPALSSSSAENDSMIEEKVMVAASVT) are extracellular. N-linked (GlcNAc...) asparagine glycosylation is present at asparagine 161. The helical transmembrane segment at 177 to 197 (VLSGIIQLLLGVLQIGFVVIY) threads the bilayer. The Cytoplasmic portion of the chain corresponds to 198-201 (LSES). The chain crosses the membrane as a helical span at residues 202 to 222 (LISGFTTAAAIHVLVSQLKFM). The Extracellular segment spans residues 223 to 250 (LQLTVPAHSDPFSIFKVLESVFSQIQKT). Residues 251-271 (NIADLVTSVIILVVVFVVKEI) form a helical membrane-spanning segment. At 272–278 (NQRYRSK) the chain is on the cytoplasmic side. Residues 279 to 299 (LPVPIPIELIMTVIATGISYG) traverse the membrane as a helical segment. Residues 300–335 (CNFEQRFGVAVVGNMSLGFQPPITPSVEVFQDTIGD) are Extracellular-facing. A helical transmembrane segment spans residues 336–356 (CFGIAIVGFAVAFSVASVYSL). Residues 357–367 (KYDYPIDGNQE) are Cytoplasmic-facing. The chain crosses the membrane as a helical span at residues 368–388 (LIALGVSNIFTGAFKGFAGST). Over 389-404 (ALSRSGVQESTGGKTQ) the chain is Extracellular. Residues 405 to 425 (VAGLLSAVIVLIVIVAIGFLL) form a helical membrane-spanning segment. Residues 426–462 (QPLQKSVLAALALGNLKGMLMQFAEIGRLWKKDKYDC) lie on the Cytoplasmic side of the membrane. The chain crosses the membrane as a helical span at residues 463-483 (LIWIMTFIFAIVLGLGLGLAA). Residues 484–757 (SVAFQLLTIV…ECQVPVETKF (274 aa)) are Extracellular-facing. Residues 518–713 (NYADVYEPEG…LTIHDAILHI (196 aa)) enclose the STAS domain. The PDZ-binding signature appears at 754 to 757 (ETKF).

Belongs to the SLC26A/SulP transporter (TC 2.A.53) family. In terms of assembly, interacts with PDZK1, CFTR, SLC26A6 and NHERF1. Interacts (via PDZ-binding motif) with NHERF4 (via the third PDZ domain); interaction leads to decreased expression of SLC26A3 on the cell membrane resulting in its reduced exchanger activity. Post-translationally, N-glycosylation is required for efficient cell surface expression, and protection from proteolytic degradation.

The protein resides in the apical cell membrane. It localises to the membrane. The protein localises to the cell membrane. It catalyses the reaction hydrogencarbonate(in) + 2 chloride(out) = hydrogencarbonate(out) + 2 chloride(in). Functionally, mediates chloride-bicarbonate exchange with a chloride bicarbonate stoichiometry of 2:1 in the intestinal epithelia. Plays a role in the chloride and bicarbonate homeostasis during sperm epididymal maturation and capacitation. The polypeptide is Chloride anion exchanger (Slc26a3) (Rattus norvegicus (Rat)).